A 428-amino-acid chain; its full sequence is MQKLLIEGGHTLEGTVSISGAKNSAVALIPAAILADSAVVIDNLPVISDVDLLAELLREIGGDVDLGNQTMTIHPEKMVAMPLPNGRVKKLRASYYLMGAMLGKFKKAVIGLPGGCNLGPRPIDQHIKGFEALGAQVTNEQGAIYLRANELRGAKIYLDVVSVGATINIMLAAVRAKGRTIIENAAKEPEIIDVATLLTSMGAKIKGAGTNVIRIDGVDHLQGCRHSIIPDRIEAGTYMIMAAAMGRRVHIDNVIPTHLESVTAKLREMGTTVEEYDDQLIISGMDPKKGVDIKTLVYPGFPTDLQQPFTSLLTSAEGTSIVTDTIYDARFKHVDELRRMGASVKVEGRSSIVNGKSSLQGAKVKASDLRAGAALVIAGLMAEGITEVSGLEHIDRGYEHLETKLTRLGAKVWREELTEEELEQVKQS.

22-23 (KN) provides a ligand contact to phosphoenolpyruvate. Arg92 contributes to the UDP-N-acetyl-alpha-D-glucosamine binding site. Cys116 acts as the Proton donor in catalysis. Position 116 is a 2-(S-cysteinyl)pyruvic acid O-phosphothioketal (Cys116). UDP-N-acetyl-alpha-D-glucosamine is bound by residues 121 to 125 (RPIDQ), Asp304, and Ile326.

This sequence belongs to the EPSP synthase family. MurA subfamily.

It is found in the cytoplasm. It carries out the reaction phosphoenolpyruvate + UDP-N-acetyl-alpha-D-glucosamine = UDP-N-acetyl-3-O-(1-carboxyvinyl)-alpha-D-glucosamine + phosphate. Its pathway is cell wall biogenesis; peptidoglycan biosynthesis. Functionally, cell wall formation. Adds enolpyruvyl to UDP-N-acetylglucosamine. The chain is UDP-N-acetylglucosamine 1-carboxyvinyltransferase 2 from Shouchella clausii (strain KSM-K16) (Alkalihalobacillus clausii).